Here is a 118-residue protein sequence, read N- to C-terminus: uncharacterized protein (118 aa).

Transmembrane regions (helical) follow at residues 12-32 (IISLVSLSVIFGAMLSGFATF), 39-59 (LMPHFASLMIAFILTLASLFI), 63-83 (IIGYLAIAFQVITPLTVCPTI), and 98-118 (SAHLALMGMMFILALGNVILF).

The protein localises to the cell membrane. This is an uncharacterized protein from Methanocaldococcus jannaschii (strain ATCC 43067 / DSM 2661 / JAL-1 / JCM 10045 / NBRC 100440) (Methanococcus jannaschii).